A 357-amino-acid polypeptide reads, in one-letter code: Aspartate carbamoyltransferase catalytic subunit (357 aa).

Residues 1-15 (MSNSIDSQSLPTVSP) are compositionally biased toward polar residues. The disordered stretch occupies residues 1-21 (MSNSIDSQSLPTVSPTDYARF). Carbamoyl phosphate-binding residues include Arg97 and Thr98. Lys125 is an L-aspartate binding site. Positions 147, 177, and 180 each coordinate carbamoyl phosphate. The L-aspartate site is built by Arg211 and Arg266. Carbamoyl phosphate is bound by residues Gly307 and Pro308.

This sequence belongs to the aspartate/ornithine carbamoyltransferase superfamily. ATCase family. Heterododecamer (2C3:3R2) of six catalytic PyrB chains organized as two trimers (C3), and six regulatory PyrI chains organized as three dimers (R2).

It catalyses the reaction carbamoyl phosphate + L-aspartate = N-carbamoyl-L-aspartate + phosphate + H(+). Its pathway is pyrimidine metabolism; UMP biosynthesis via de novo pathway; (S)-dihydroorotate from bicarbonate: step 2/3. In terms of biological role, catalyzes the condensation of carbamoyl phosphate and aspartate to form carbamoyl aspartate and inorganic phosphate, the committed step in the de novo pyrimidine nucleotide biosynthesis pathway. This chain is Aspartate carbamoyltransferase catalytic subunit, found in Psychrobacter cryohalolentis (strain ATCC BAA-1226 / DSM 17306 / VKM B-2378 / K5).